The sequence spans 176 residues: Oleosin Ara h 14.0101 (176 aa).

Ala2 carries the N-acetylalanine; alternate modification. Helical transmembrane passes span Ile50–Ile80 and Ala95–Leu117. Residues Thr157–Ser176 form a disordered region.

This sequence belongs to the oleosin family. Homodimer. Forms oligomers. As to expression, expressed in seeds (at protein level). Not expressed in leaves.

It localises to the lipid droplet. Its subcellular location is the membrane. In terms of biological role, may have a structural role to stabilize the lipid body during desiccation of the seed by preventing coalescence of the oil. Probably interacts with both lipid and phospholipid moieties of lipid bodies. May also provide recognition signals for specific lipase anchorage in lipolysis during seedling growth. This is Oleosin Ara h 14.0101 from Arachis hypogaea (Peanut).